A 189-amino-acid chain; its full sequence is Elongation factor P (189 aa).

This sequence belongs to the elongation factor P family.

Its subcellular location is the cytoplasm. It participates in protein biosynthesis; polypeptide chain elongation. Functionally, involved in peptide bond synthesis. Stimulates efficient translation and peptide-bond synthesis on native or reconstituted 70S ribosomes in vitro. Probably functions indirectly by altering the affinity of the ribosome for aminoacyl-tRNA, thus increasing their reactivity as acceptors for peptidyl transferase. The sequence is that of Elongation factor P from Ehrlichia canis (strain Jake).